We begin with the raw amino-acid sequence, 845 residues long: DNA replication licensing factor MCM7 (845 aa).

The MCM domain maps to 410–617; the sequence is VYNRLAKSIA…DDEKLAEHVT (208 aa). ATP is bound by residues Tyr-423, Gly-463, Ala-465, Lys-466, Ser-467, Asn-568, Arg-593, and Arg-687. The Arginine finger motif lies at 592–595; sequence SRFD. Thr-811 is modified (phosphothreonine). Residues 812–845 form a disordered region; that stretch reads DQEDSLVSTPKLAPQTTASANVSAQDSDIDLQDA. Residue Ser-819 is modified to Phosphoserine. A compositionally biased stretch (polar residues) spans 825–837; sequence PQTTASANVSAQD. Ser-838 carries the phosphoserine modification.

Belongs to the MCM family. In terms of assembly, component of the MCM2-7 complex. The complex forms a toroidal hexameric ring with the proposed subunit order MCM2-MCM6-MCM4-MCM7-MCM3-MCM5; loaded onto DNA, forms a head-head double hexamer. Interacts with CSM1 and MCM10.

It localises to the cytoplasm. The protein resides in the nucleus. It carries out the reaction ATP + H2O = ADP + phosphate + H(+). Its function is as follows. Acts as a component of the MCM2-7 complex (MCM complex) which is the putative replicative helicase essential for 'once per cell cycle' DNA replication initiation and elongation in eukaryotic cells. Core component of CDC45-MCM-GINS (CMG) helicase, the molecular machine that unwinds template DNA during replication, and around which the replisome is built. The active ATPase sites in the MCM2-7 ring are formed through the interaction surfaces of two neighboring subunits such that a critical structure of a conserved arginine finger motif is provided in trans relative to the ATP-binding site of the Walker A box of the adjacent subunit. The six ATPase active sites, however, are likely to contribute differentially to the complex helicase activity. Once loaded onto DNA, double hexamers can slide on dsDNA in the absence of ATPase activity. The sequence is that of DNA replication licensing factor MCM7 (MCM7) from Saccharomyces cerevisiae (strain ATCC 204508 / S288c) (Baker's yeast).